The sequence spans 350 residues: Erythronate-4-phosphate dehydrogenase (350 aa).

Residues serine 45 and threonine 66 each coordinate substrate. NAD(+)-binding positions include glutamine 124–valine 125, aspartate 144, alanine 203–arginine 205, and aspartate 226. Residue arginine 205 is part of the active site. The active site involves glutamate 231. Histidine 248 (proton donor) is an active-site residue. Glycine 251 contacts NAD(+).

Belongs to the D-isomer specific 2-hydroxyacid dehydrogenase family. PdxB subfamily. Homodimer.

It is found in the cytoplasm. The catalysed reaction is 4-phospho-D-erythronate + NAD(+) = (R)-3-hydroxy-2-oxo-4-phosphooxybutanoate + NADH + H(+). The protein operates within cofactor biosynthesis; pyridoxine 5'-phosphate biosynthesis; pyridoxine 5'-phosphate from D-erythrose 4-phosphate: step 2/5. In terms of biological role, catalyzes the oxidation of erythronate-4-phosphate to 3-hydroxy-2-oxo-4-phosphonooxybutanoate. The protein is Erythronate-4-phosphate dehydrogenase of Legionella pneumophila (strain Lens).